Consider the following 430-residue polypeptide: Protein trichome birefringence-like 24 (430 aa).

Residues 15–35 (VLLIKLISAILISFFAFRLFI) form a helical; Signal-anchor for type II membrane protein membrane-spanning segment. The short motif at 153 to 155 (GDS) is the GDS motif element. The DCXHWCLPGXXDXWN motif signature appears at 406–420 (DCLHWCLPGPFDYLN).

This sequence belongs to the PC-esterase family. TBL subfamily.

The protein localises to the membrane. In terms of biological role, may act as a bridging protein that binds pectin and other cell wall polysaccharides. Probably involved in maintaining esterification of pectins. May be involved in the specific O-acetylation of cell wall polymers. This is Protein trichome birefringence-like 24 (TBL24) from Arabidopsis thaliana (Mouse-ear cress).